The sequence spans 287 residues: Nucleotide-binding protein VV0445 (287 aa).

An ATP-binding site is contributed by 8 to 15 (GHSGAGKS). Residue 56–59 (DVRN) coordinates GTP.

Belongs to the RapZ-like family.

Functionally, displays ATPase and GTPase activities. The polypeptide is Nucleotide-binding protein VV0445 (Vibrio vulnificus (strain YJ016)).